Consider the following 265-residue polypeptide: Transcription factor LBX1 (265 aa).

Basic and acidic residues predominate over residues 1–20 (MTSKDEAKSSSVEERRRHAL). A disordered region spans residues 1-33 (MTSKDEAKSSSVEERRRHALDLLPPPANSNKPL). The homeobox DNA-binding region spans 125–184 (RRKSRTAFTNHQIYELEKRFLYQKYLSPADRDQIAQQLGLTNAQVITWFQNRRAKLKRDL). The interval 212 to 265 (EEETNSVRDDSRSRSPQLGLSGHMPLSPSSPLTEQHTSKECSEDEEDVEIDVDD) is disordered. Acidic residues predominate over residues 253-265 (SEDEEDVEIDVDD).

The protein resides in the nucleus. Functionally, transcription factor that controls hypaxial muscle development by down-regulating myod1 and cdkn1b/p27, thereby allowing myoblasts to proliferate before the onset of terminal differentiation. This chain is Transcription factor LBX1, found in Xenopus tropicalis (Western clawed frog).